Here is a 332-residue protein sequence, read N- to C-terminus: Diaminopimelate epimerase (332 aa).

Asn13 and Asn73 together coordinate substrate. The Proton donor role is filled by Cys82. Substrate-binding positions include 83–84 (GN), Asn172, Asn209, and 227–228 (ER). Catalysis depends on Cys236, which acts as the Proton acceptor. 237–238 (GT) is a substrate binding site.

The protein belongs to the diaminopimelate epimerase family. In terms of assembly, homodimer.

Its subcellular location is the cytoplasm. The enzyme catalyses (2S,6S)-2,6-diaminopimelate = meso-2,6-diaminopimelate. Its pathway is amino-acid biosynthesis; L-lysine biosynthesis via DAP pathway; DL-2,6-diaminopimelate from LL-2,6-diaminopimelate: step 1/1. Catalyzes the stereoinversion of LL-2,6-diaminopimelate (L,L-DAP) to meso-diaminopimelate (meso-DAP), a precursor of L-lysine and an essential component of the bacterial peptidoglycan. The polypeptide is Diaminopimelate epimerase (Lactiplantibacillus plantarum (strain ATCC BAA-793 / NCIMB 8826 / WCFS1) (Lactobacillus plantarum)).